Consider the following 163-residue polypeptide: Inorganic pyrophosphatase (163 aa).

The substrate site is built by Lys21, Arg35, and Tyr47. Residues Asp57, Asp62, and Asp94 each coordinate Mg(2+). Tyr131 contributes to the substrate binding site.

It belongs to the PPase family. In terms of assembly, homohexamer. It depends on Mg(2+) as a cofactor.

Its subcellular location is the cytoplasm. It carries out the reaction diphosphate + H2O = 2 phosphate + H(+). Its function is as follows. Catalyzes the hydrolysis of inorganic pyrophosphate (PPi) forming two phosphate ions. The chain is Inorganic pyrophosphatase from Halalkalibacterium halodurans (strain ATCC BAA-125 / DSM 18197 / FERM 7344 / JCM 9153 / C-125) (Bacillus halodurans).